A 130-amino-acid chain; its full sequence is Small ribosomal subunit protein uS8 (130 aa).

Belongs to the universal ribosomal protein uS8 family. In terms of assembly, part of the 30S ribosomal subunit. Contacts proteins S5 and S12.

In terms of biological role, one of the primary rRNA binding proteins, it binds directly to 16S rRNA central domain where it helps coordinate assembly of the platform of the 30S subunit. In Pseudomonas fluorescens (strain SBW25), this protein is Small ribosomal subunit protein uS8.